The chain runs to 721 residues: Protein quick-to-court (721 aa).

5 disordered regions span residues 1-42 (MMTS…RIPH), 143-210 (VGNS…ASVA), 360-379 (SSPEERSASSDAVTVREAEL), 393-428 (DEGNAKGSPRHLSRQQQQQANHSLQAMQMSAEMQSS), and 441-471 (SSVHSKDSQTQSEACGTATPDGEADVGCGAG). Basic and acidic residues predominate over residues 17 to 31 (QVQREKDNDSAEDSH). The span at 161-201 (NGGSDISSSGTSSSSSNNKESSPRTTRTPRTPQTPQTPQTP) shows a compositional bias: low complexity. The segment covering 362–379 (PEERSASSDAVTVREAEL) has biased composition (basic and acidic residues). Residues 406 to 420 (RQQQQQANHSLQAMQ) show a composition bias toward low complexity. A compositionally biased stretch (polar residues) spans 441-454 (SSVHSKDSQTQSEA). A coiled-coil region spans residues 511–569 (KRSHNDKVEALLQKLAECNTRYSDMVPDYEQAKQRIRELEKQLEDLQRKLIEHEEKQNK). One can recognise a GRIP domain in the interval 668 to 716 (HVDPEVTLQFLKSAIFYFLTDKENSQGHLQAIESILEFTDAEKQKISAA).

As to expression, expressed in the third antennal segment and the maxillary palp, with increased expression near the cuticle of both olfactory organs. Also detected in the second antenna segment. In the brain, expressed in the central nervous system, with high levels of expression in the visual system including the retina and optic lobe, and uniform expression in the cortex. Detected in the thorax and abdomen, with increased expression in the ventral ganglion. In males, detected in the reproductive tract including the ejaculatory bulb and testis.

In adult males, modulates sexual behavior by playing a role in sex discrimination and maintaining normal levels of sexual activity towards both males and females. This Drosophila melanogaster (Fruit fly) protein is Protein quick-to-court.